A 310-amino-acid chain; its full sequence is Vomeronasal type-1 receptor 40 (310 aa).

The Extracellular portion of the chain corresponds to Met-1 to Glu-20. Residues Val-21–Gly-41 form a helical membrane-spanning segment. Residues Glu-42 to Leu-50 lie on the Cytoplasmic side of the membrane. The helical transmembrane segment at Tyr-51–Val-71 threads the bilayer. The Extracellular segment spans residues Asp-72–Arg-93. Cys-85 and Cys-172 are joined by a disulfide. The helical transmembrane segment at Leu-94–Leu-114 threads the bilayer. Residues Ser-115–Gly-134 are Cytoplasmic-facing. A helical membrane pass occupies residues Ala-135–Ile-155. The Extracellular portion of the chain corresponds to Ala-156–Ala-190. Residue Asn-159 is glycosylated (N-linked (GlcNAc...) asparagine). Residues Ile-191 to Leu-211 traverse the membrane as a helical segment. The Cytoplasmic segment spans residues Trp-212–Arg-238. The chain crosses the membrane as a helical span at residues Thr-239–Tyr-259. At Ser-260 to Ser-268 the chain is on the extracellular side. A helical membrane pass occupies residues Ile-269–Phe-289. The Cytoplasmic segment spans residues Ile-290–Ile-310.

The protein belongs to the G-protein coupled receptor 1 family.

The protein resides in the cell membrane. Putative pheromone receptor implicated in the regulation of social and reproductive behavior. The polypeptide is Vomeronasal type-1 receptor 40 (Vmn1r40) (Mus musculus (Mouse)).